A 190-amino-acid chain; its full sequence is Shikimate kinase (190 aa).

15-20 is an ATP binding site; it reads GSGKST. Residue Ser-19 coordinates Mg(2+). Substrate is bound by residues Asp-37, Arg-61, and Gly-83. ATP is bound at residue Arg-121. Residue Arg-148 participates in substrate binding.

Belongs to the shikimate kinase family. In terms of assembly, monomer. Mg(2+) serves as cofactor.

The protein localises to the cytoplasm. It carries out the reaction shikimate + ATP = 3-phosphoshikimate + ADP + H(+). Its pathway is metabolic intermediate biosynthesis; chorismate biosynthesis; chorismate from D-erythrose 4-phosphate and phosphoenolpyruvate: step 5/7. In terms of biological role, catalyzes the specific phosphorylation of the 3-hydroxyl group of shikimic acid using ATP as a cosubstrate. The protein is Shikimate kinase of Chlorobium chlorochromatii (strain CaD3).